A 479-amino-acid polypeptide reads, in one-letter code: Inhibitory synaptic factor 2A (479 aa).

The residue at position 177 (serine 177) is a Phosphoserine. 2 disordered regions span residues 226–247 and 315–338; these read GRAK…ALRR and SPEC…PSPT. The span at 228–237 shows a compositional bias: basic and acidic residues; it reads AKQDRGRPNS. A compositionally biased stretch (polar residues) spans 318 to 337; the sequence is CSEQPSQTHTPPGLGNQPSP. A coiled-coil region spans residues 353–379; sequence TEVVDLKAQLQMMENLISSSQETIKVL. Residues 449–461 are compositionally biased toward polar residues; that stretch reads SPYSQETYSSTPK. Positions 449–472 are disordered; the sequence is SPYSQETYSSTPKQKSKTESKKHG.

Belongs to the INSYN2 family. In terms of assembly, interacts with GPHN.

Its subcellular location is the postsynaptic density. In terms of biological role, component of the protein machinery at the inhibitory synapses, probably acting as a scaffold. Inhibitory synapses dampen neuronal activity through postsynaptic hyperpolarization. This synaptic inhibition is fundamental for the functioning of the central nervous system, shaping and orchestrating the flow of information through neuronal networks to generate a precise neural code. The polypeptide is Inhibitory synaptic factor 2A (Homo sapiens (Human)).